A 264-amino-acid chain; its full sequence is Carbohydrate deacetylase (264 aa).

The active-site Proton acceptor is Asp-20. Asp-21, His-60, and His-127 together coordinate Mg(2+). His-215 functions as the Proton donor in the catalytic mechanism.

This sequence belongs to the YdjC deacetylase family. As to quaternary structure, homodimer. The cofactor is Mg(2+).

In terms of biological role, probably catalyzes the deacetylation of acetylated carbohydrates an important step in the degradation of oligosaccharides. This is Carbohydrate deacetylase from Thermus thermophilus (strain ATCC 27634 / DSM 579 / HB8).